We begin with the raw amino-acid sequence, 365 residues long: Quinone oxidoreductase-like protein 2 homolog (365 aa).

The protein belongs to the zinc-containing alcohol dehydrogenase family. Quinone oxidoreductase subfamily.

The polypeptide is Quinone oxidoreductase-like protein 2 homolog (Nematostella vectensis (Starlet sea anemone)).